The sequence spans 714 residues: Calpain-1 catalytic subunit (714 aa).

At Ser2 the chain carries N-acetylserine. In terms of domain architecture, Calpain catalytic spans 55–354 (LFRDEAFPPV…FTRLEICNLT (300 aa)). Positions 109 and 114 each coordinate Ca(2+). Catalysis depends on residues Cys115, His272, and Asn296. Ca(2+) is bound by residues Asn316, Asp318, and Asp323. Phosphothreonine is present on Thr354. The interval 355–526 (PDALKSRTIR…KSAGTVELDD (172 aa)) is domain III. The segment at 527–542 (QIQANLPDEQVLSEEE) is linker. 4 consecutive EF-hand domains span residues 541–576 (EEIDENFKALFRQLAGEDMEISVKELRTILNRIISK), 585–618 (FSLESCRSMVNLMDRDGNGKLGLVEFNILWNRIR), 615–650 (NRIRNYLSIFRKFDLDKSGSMSAYEMRMAIESAGFK), and 680–714 (VRLETMFRFFKTLDTDLDGVVTFDLFKWLQLTMFA). The tract at residues 543-713 (IDENFKALFR…LFKWLQLTMF (171 aa)) is domain IV. Residues Asp598, Asp600, Asn602, Lys604, Glu609, Asp628, Asp630, Ser632, Ser634, and Glu639 each contribute to the Ca(2+) site.

It belongs to the peptidase C2 family. As to quaternary structure, forms a heterodimer with a small (regulatory) subunit CAPNS1. The cofactor is Ca(2+). Undergoes calcium-induced successive autoproteolytic cleavages that generate a membrane-bound 78 kDa active form and an intracellular 75 kDa active form. Calpastatin reduces with high efficiency the transition from 78 kDa to 75 kDa calpain forms. In terms of tissue distribution, ubiquitous.

It is found in the cytoplasm. It localises to the cell membrane. It catalyses the reaction Broad endopeptidase specificity.. Its activity is regulated as follows. Activated by micromolar concentrations of calcium and inhibited by calpastatin. Calcium-regulated non-lysosomal thiol-protease which catalyzes limited proteolysis of substrates involved in cytoskeletal remodeling and signal transduction. Proteolytically cleaves CTBP1 at 'Asn-375', 'Gly-387' and 'His-409'. Cleaves and activates caspase-7 (CASP7). In Homo sapiens (Human), this protein is Calpain-1 catalytic subunit.